A 165-amino-acid polypeptide reads, in one-letter code: Small ribosomal subunit protein uS17c (165 aa).

The transit peptide at 1 to 57 directs the protein to the chloroplast; it reads MSLSFSLLKPPLSSSNPNPFLHGTTTKLSLLPSFSALSLSSSPPSSSTTYTFPVIKA. A disordered region spans residues 128 to 165; the sequence is AVAPEGRQSSATRPKPIQAASDELGIPLESQVEGDKTV.

In terms of assembly, component of the chloroplast small ribosomal subunit (SSU). Mature 70S chloroplast ribosomes of higher plants consist of a small (30S) and a large (50S) subunit. The 30S small subunit contains 1 molecule of ribosomal RNA (16S rRNA) and 24 different proteins. The 50S large subunit contains 3 rRNA molecules (23S, 5S and 4.5S rRNA) and 33 different proteins.

Its subcellular location is the plastid. It is found in the chloroplast. Functionally, component of the chloroplast ribosome (chloro-ribosome), a dedicated translation machinery responsible for the synthesis of chloroplast genome-encoded proteins, including proteins of the transcription and translation machinery and components of the photosynthetic apparatus. In Spinacia oleracea (Spinach), this protein is Small ribosomal subunit protein uS17c (RPS17).